A 410-amino-acid polypeptide reads, in one-letter code: MSWDQVWIDVNVATMDTNIQGAYGVIPQAAIAVKDGKIAWVGPRSELPEFDVLATPVYRGKGGWITPGLIDAHTHLVFAGNRANEFEQRLQGATYAEIARAGGGIISTVNACRDADEAELFELGRQRLNALAREGVTTVEIKSGYGLNTETELKLLRVARELGEHHHIDVSTTFLGAHAIPPEYKDNADAYIDLVVNDMLPAVIAENLADAVDVFCENIAFNLEQTERVLTAAKQAGLQIKLHAEQLTNMGGSALAAKLGAKSVDHIEFLDEAGIKAISESGTCATLLPGAFYFLRETQLPPIDLLRQYKVPMVIASDFNPGSSPICSTLLMLNMACTLFRLTPEEALQGVTINAAKALGIDNNVGSITVGKQADFCLWDITTPAQLAYAYGVNLCKTVVKNGQVVALPN.

Residues His-73 and His-75 each contribute to the Fe(3+) site. Residues His-73 and His-75 each coordinate Zn(2+). Positions 82, 145, and 178 each coordinate 4-imidazolone-5-propanoate. N-formimidoyl-L-glutamate is bound at residue Tyr-145. A Fe(3+)-binding site is contributed by His-243. His-243 serves as a coordination point for Zn(2+). 4-imidazolone-5-propanoate is bound at residue Gln-246. Asp-318 lines the Fe(3+) pocket. Residue Asp-318 participates in Zn(2+) binding. Positions 320 and 322 each coordinate N-formimidoyl-L-glutamate. Ser-323 is a binding site for 4-imidazolone-5-propanoate.

This sequence belongs to the metallo-dependent hydrolases superfamily. HutI family. It depends on Zn(2+) as a cofactor. Requires Fe(3+) as cofactor.

Its subcellular location is the cytoplasm. The catalysed reaction is 4-imidazolone-5-propanoate + H2O = N-formimidoyl-L-glutamate. The protein operates within amino-acid degradation; L-histidine degradation into L-glutamate; N-formimidoyl-L-glutamate from L-histidine: step 3/3. Catalyzes the hydrolytic cleavage of the carbon-nitrogen bond in imidazolone-5-propanoate to yield N-formimidoyl-L-glutamate. It is the third step in the universal histidine degradation pathway. The protein is Imidazolonepropionase of Shewanella frigidimarina (strain NCIMB 400).